A 93-amino-acid polypeptide reads, in one-letter code: Probable endoribonuclease MazF1 (93 aa).

Belongs to the PemK/MazF family. Forms a complex with cognate antitoxin MazE1.

Functionally, toxic component of a type II toxin-antitoxin (TA) system, its cognate antitoxin is MazE1. Probably an endoribonuclease. The polypeptide is Probable endoribonuclease MazF1 (mazF1) (Mycobacterium tuberculosis (strain ATCC 25618 / H37Rv)).